A 279-amino-acid chain; its full sequence is Urease accessory protein UreD (279 aa).

Belongs to the UreD family. UreD, UreF and UreG form a complex that acts as a GTP-hydrolysis-dependent molecular chaperone, activating the urease apoprotein by helping to assemble the nickel containing metallocenter of UreC. The UreE protein probably delivers the nickel.

Its subcellular location is the cytoplasm. Its function is as follows. Required for maturation of urease via the functional incorporation of the urease nickel metallocenter. This Trichormus variabilis (strain ATCC 29413 / PCC 7937) (Anabaena variabilis) protein is Urease accessory protein UreD.